Consider the following 284-residue polypeptide: 2-dehydro-3-deoxyphosphooctonate aldolase (284 aa).

The protein belongs to the KdsA family.

Its subcellular location is the cytoplasm. It carries out the reaction D-arabinose 5-phosphate + phosphoenolpyruvate + H2O = 3-deoxy-alpha-D-manno-2-octulosonate-8-phosphate + phosphate. It participates in carbohydrate biosynthesis; 3-deoxy-D-manno-octulosonate biosynthesis; 3-deoxy-D-manno-octulosonate from D-ribulose 5-phosphate: step 2/3. Its pathway is bacterial outer membrane biogenesis; lipopolysaccharide biosynthesis. The polypeptide is 2-dehydro-3-deoxyphosphooctonate aldolase (Enterobacter sp. (strain 638)).